The following is a 354-amino-acid chain: Galectin-9 (354 aa).

2 consecutive Galectin domains span residues 17–147 and 226–354; these read FTGI…INFQ and FFTS…HVQT. A beta-D-galactoside is bound by residues N47, H60, R64, N74, 81–87, H266, R270, T280, and 286–292; these read WGPEERK and WGPEERS.

The isoform Long is expressed exclusively in the small intestine.

The protein resides in the cytoplasm. It is found in the nucleus. It localises to the secreted. In terms of biological role, binds galactosides. Has high affinity for the Forssman pentasaccharide. Ligand for HAVCR2/TIM3. Binding to HAVCR2 induces T-helper type 1 lymphocyte (Th1) death. Also stimulates bactericidal activity in infected macrophages by causing macrophage activation and IL1B secretion which restricts intracellular bacterial growth. Ligand for P4HB; the interaction retains P4HB at the cell surface of Th2 T helper cells, increasing disulfide reductase activity at the plasma membrane, altering the plasma membrane redox state and enhancing cell migration. Ligand for CD44; the interaction enhances binding of SMAD3 to the FOXP3 promoter, leading to up-regulation of FOXP3 expression and increased induced regulatory T (iTreg) cell stability and suppressive function. Promotes ability of mesenchymal stromal cells to suppress T-cell proliferation. Expands regulatory T-cells and induces cytotoxic T-cell apoptosis following virus infection. Activates ERK1/2 phosphorylation inducing cytokine (IL-6, IL-8, IL-12) and chemokine (CCL2) production in mast and dendritic cells. Inhibits degranulation and induces apoptosis of mast cells. Induces maturation and migration of dendritic cells. Inhibits natural killer (NK) cell function. Can transform NK cell phenotype from peripheral to decidual during pregnancy. Astrocyte derived galectin-9 enhances microglial TNF production. May play a role in thymocyte-epithelial interactions relevant to the biology of the thymus. May provide the molecular basis for urate flux across cell membranes, allowing urate that is formed during purine metabolism to efflux from cells and serving as an electrogenic transporter that plays an important role in renal and gastrointestinal urate excretion. Highly selective to the anion urate. The protein is Galectin-9 (Lgals9) of Rattus norvegicus (Rat).